A 318-amino-acid polypeptide reads, in one-letter code: UDP-N-acetylenolpyruvoylglucosamine reductase (318 aa).

Positions 38 to 204 constitute an FAD-binding PCMH-type domain; the sequence is IGGICPVVVE…LGIEILLKEG (167 aa). Residue arginine 182 is part of the active site. The disordered stretch occupies residues 212-232; sequence SLKDKRDRRNSSQPENKKSAG. The span at 213-229 shows a compositional bias: basic and acidic residues; it reads LKDKRDRRNSSQPENKK. Serine 233 serves as the catalytic Proton donor. Residue glutamate 310 is part of the active site.

It belongs to the MurB family. FAD serves as cofactor.

The protein resides in the cytoplasm. It carries out the reaction UDP-N-acetyl-alpha-D-muramate + NADP(+) = UDP-N-acetyl-3-O-(1-carboxyvinyl)-alpha-D-glucosamine + NADPH + H(+). It participates in cell wall biogenesis; peptidoglycan biosynthesis. Functionally, cell wall formation. This is UDP-N-acetylenolpyruvoylglucosamine reductase from Leptospira borgpetersenii serovar Hardjo-bovis (strain L550).